Reading from the N-terminus, the 379-residue chain is MLSTLMKLLSACLWPSSSSGKSSDSTGKQDGLLWYKDFGQHLVGEFSMAVVQANNLLEDQSQVESGPLSTLDSGPYGTFIGIYDGHGGPETSRFVNDHLFQHLKRFAAEQASMSVDVIKKAYEATEEGFLGVVTKQWPTKPQIAAVGSCCLVGVICGGMLYIANVGDSRAVLGRAMKATGEVIALQLSAEHNVSIESVRQEMHSLHPDDSHIVMLKHNVWRVKGLIQISRSIGDVYLKKAEFNKEPLYTKYRIREPFKRPILSGEPTITEHEIQPQDKFLIFASDGLWEQMSNQEAVDIVQNHPRNGIARRLVKMALQEAAKKREMRYSDLKKIERGVRRHFHDDITVVIIFLDTNQVSSVKGPPLSIRGGGMTFPKKI.

A signal peptide spans M1 to G20. The 312-residue stretch at L42–L353 folds into the PPM-type phosphatase domain. S73 is subject to Phosphoserine. D84, G85, D285, and D344 together coordinate Mn(2+).

It belongs to the PP2C family. Interacts with SAUR19. Requires Mg(2+) as cofactor. Mn(2+) is required as a cofactor.

The catalysed reaction is O-phospho-L-seryl-[protein] + H2O = L-seryl-[protein] + phosphate. It carries out the reaction O-phospho-L-threonyl-[protein] + H2O = L-threonyl-[protein] + phosphate. In terms of biological role, may dephosphorylate and repress plasma membrane H(+)-ATPases (PM H(+)-ATPases, e.g. AHA1 and AHA2), thus influencing negatively plant growth and fitness. In Arabidopsis thaliana (Mouse-ear cress), this protein is Probable protein phosphatase 2C 46.